The primary structure comprises 227 residues: Cytidylate kinase (227 aa).

12–20 (GPSGAGKGT) is a binding site for ATP.

This sequence belongs to the cytidylate kinase family. Type 1 subfamily.

The protein localises to the cytoplasm. The catalysed reaction is CMP + ATP = CDP + ADP. It carries out the reaction dCMP + ATP = dCDP + ADP. The sequence is that of Cytidylate kinase from Xanthomonas oryzae pv. oryzae (strain PXO99A).